The chain runs to 215 residues: Adenylate kinase (215 aa).

An ATP-binding site is contributed by G10–T15. The tract at residues S30–V59 is NMP. AMP is bound by residues T31, R36, K57–V59, G85–R88, and Q92. The interval G126–D163 is LID. R127 provides a ligand contact to ATP. Positions 130 and 133 each coordinate Zn(2+). Residue S136–Y137 coordinates ATP. Zn(2+) is bound by residues C150 and C153. Residues R160 and R171 each contribute to the AMP site. L199 provides a ligand contact to ATP.

The protein belongs to the adenylate kinase family. In terms of assembly, monomer.

The protein localises to the cytoplasm. It carries out the reaction AMP + ATP = 2 ADP. Its pathway is purine metabolism; AMP biosynthesis via salvage pathway; AMP from ADP: step 1/1. Its function is as follows. Catalyzes the reversible transfer of the terminal phosphate group between ATP and AMP. Plays an important role in cellular energy homeostasis and in adenine nucleotide metabolism. The chain is Adenylate kinase from Finegoldia magna (strain ATCC 29328 / DSM 20472 / WAL 2508) (Peptostreptococcus magnus).